The following is a 235-amino-acid chain: MTKKNWNINLKEMVKVGVHFGHETRKWNPKMAPYIFKERKDNHILNLTYTARFLSEACDFVFDGAKRGKQFMIVGTKHQTADAAKLAALAARCHYVNKKWLAGMLTNWFTTEARLEKFKNLTKKKNTGGFDGFTKKEAAILKRELNKLQEDLGGIRYMTKLPDIVIILDQKGEYTAIRECRTLGIPTICLVDTDCDPDLVDIPIPANDDGRGPIRLILNKLILAIRAGRELYYKK.

Belongs to the universal ribosomal protein uS2 family.

Its subcellular location is the plastid. The protein resides in the chloroplast. The chain is Small ribosomal subunit protein uS2c (rps2) from Cryptomeria japonica (Japanese cedar).